Here is a 119-residue protein sequence, read N- to C-terminus: Beta-2-microglobulin (119 aa).

A signal peptide spans 1-20 (MSPSVALAVLALLSLSGLEA). One can recognise an Ig-like C1-type domain in the interval 25–114 (PKIQVYSRHP…VTLSGPRTVK (90 aa)). The cysteines at positions 45 and 100 are disulfide-linked.

It belongs to the beta-2-microglobulin family. In terms of assembly, heterodimer of an alpha chain and a beta chain. Beta-2-microglobulin is the beta-chain of major histocompatibility complex class I molecules.

It localises to the secreted. Its function is as follows. Component of the class I major histocompatibility complex (MHC). Involved in the presentation of peptide antigens to the immune system. This is Beta-2-microglobulin (B2M) from Macaca fascicularis (Crab-eating macaque).